The primary structure comprises 418 residues: Tyrosine--tRNA ligase (418 aa).

Tyrosine 34 is an L-tyrosine binding site. The short motif at 39–48 (PTADSLHLGH) is the 'HIGH' region element. Residues tyrosine 169 and glutamine 173 each contribute to the L-tyrosine site. The 'KMSKS' region motif lies at 229 to 233 (KFGKS). An ATP-binding site is contributed by lysine 232. The 67-residue stretch at 352–418 (LNLVDMLVTA…GKKKYAVLTY (67 aa)) folds into the S4 RNA-binding domain.

The protein belongs to the class-I aminoacyl-tRNA synthetase family. TyrS type 1 subfamily. As to quaternary structure, homodimer.

Its subcellular location is the cytoplasm. The enzyme catalyses tRNA(Tyr) + L-tyrosine + ATP = L-tyrosyl-tRNA(Tyr) + AMP + diphosphate + H(+). Its function is as follows. Catalyzes the attachment of tyrosine to tRNA(Tyr) in a two-step reaction: tyrosine is first activated by ATP to form Tyr-AMP and then transferred to the acceptor end of tRNA(Tyr). The polypeptide is Tyrosine--tRNA ligase (Streptococcus pyogenes serotype M18 (strain MGAS8232)).